The chain runs to 182 residues: Ribosome-recycling factor (182 aa).

The protein belongs to the RRF family.

The protein localises to the cytoplasm. Responsible for the release of ribosomes from messenger RNA at the termination of protein biosynthesis. May increase the efficiency of translation by recycling ribosomes from one round of translation to another. In Prochlorococcus marinus (strain MIT 9215), this protein is Ribosome-recycling factor.